We begin with the raw amino-acid sequence, 281 residues long: Insulin-like growth factor-binding protein 7 (281 aa).

The first 25 residues, 1–25 (MERPPRALLLGAAGLLLLLLPLSSS), serve as a signal peptide directing secretion. In terms of domain architecture, IGFBP N-terminal spans 27-113 (SSDACGPCVP…PATLAVCVCK (87 aa)). 8 disulfides stabilise this stretch: C31–C56, C34–C58, C39–C59, C47–C62, C70–C86, C80–C110, C112–C130, and C119–C155. A Kazal-like domain is found at 98–157 (GAAAGGPATLAVCVCKSRYPVCGSNGITYPSGCQLRAASLRAESRGEKAITQVSKGTCEQ). Positions 159-263 (PSIVTPPKDI…GQASAAAKIT (105 aa)) constitute an Ig-like C2-type domain. N170 is a glycosylation site (N-linked (GlcNAc...) asparagine). C180 and C247 are disulfide-bonded. S238 is subject to Phosphoserine.

May interact with VPS24/CHMP3; the relevance of such interaction however remains unclear. Interacts with CD93; this interaction plays a role in endothelial cells angiogenesis. In terms of processing, N-glycosylated. As to expression, expressed at high levels in lung, kidney, small intestine, testis and uterus and at moderate levels in liver.

The protein resides in the secreted. Binds IGF1 and IGF2 with a relatively low affinity. Stimulates prostacyclin (PGI2) production. Stimulates cell adhesion. Acts as a ligand for CD93 to play a role in angiogenesis. This chain is Insulin-like growth factor-binding protein 7 (Igfbp7), found in Mus musculus (Mouse).